Here is a 233-residue protein sequence, read N- to C-terminus: Probable fimbrial chaperone protein ElfD (233 aa).

The first 26 residues, 1 to 26 (MKTCITKGIVTVSLTAILLSCSSTWA), serve as a signal peptide directing secretion.

It belongs to the periplasmic pilus chaperone family.

The protein resides in the periplasm. Its function is as follows. Part of the elfADCG fimbrial operon, which could be required for adherence to host epithelial cells. Could be required for the biogenesis of the ElfA fimbriae. This is Probable fimbrial chaperone protein ElfD (elfD) from Escherichia coli O157:H7.